A 51-amino-acid chain; its full sequence is Sperm protamine P1 (51 aa).

Belongs to the protamine P1 family. As to expression, testis.

Its subcellular location is the nucleus. The protein localises to the chromosome. Functionally, protamines substitute for histones in the chromatin of sperm during the haploid phase of spermatogenesis. They compact sperm DNA into a highly condensed, stable and inactive complex. The sequence is that of Sperm protamine P1 (PRM1) from Nasalis larvatus (Proboscis monkey).